The primary structure comprises 147 residues: MEVILRNAVDKLGHPGDIVSVSPGYARNFLIPRGFAYEATQGNRKRIAFEKSRLEALENERIAAAQAIADKLAEVSVTFAARVGEEGKLFGSVTTADIAHQLEAQGFKIEKRQIELNEPIKTLGVYRVGVRLHADVHPEIKVWVIKQ.

It belongs to the bacterial ribosomal protein bL9 family.

Binds to the 23S rRNA. This is Large ribosomal subunit protein bL9 from Gemmatimonas aurantiaca (strain DSM 14586 / JCM 11422 / NBRC 100505 / T-27).